The sequence spans 210 residues: Ribosomal RNA large subunit methyltransferase E (210 aa).

Residues glycine 64, tryptophan 66, aspartate 84, aspartate 100, and aspartate 125 each coordinate S-adenosyl-L-methionine. The active-site Proton acceptor is lysine 165.

The protein belongs to the class I-like SAM-binding methyltransferase superfamily. RNA methyltransferase RlmE family.

Its subcellular location is the cytoplasm. The enzyme catalyses uridine(2552) in 23S rRNA + S-adenosyl-L-methionine = 2'-O-methyluridine(2552) in 23S rRNA + S-adenosyl-L-homocysteine + H(+). In terms of biological role, specifically methylates the uridine in position 2552 of 23S rRNA at the 2'-O position of the ribose in the fully assembled 50S ribosomal subunit. This is Ribosomal RNA large subunit methyltransferase E from Chromohalobacter salexigens (strain ATCC BAA-138 / DSM 3043 / CIP 106854 / NCIMB 13768 / 1H11).